The primary structure comprises 185 residues: ATP synthase subunit delta (185 aa).

Belongs to the ATPase delta chain family. As to quaternary structure, F-type ATPases have 2 components, F(1) - the catalytic core - and F(0) - the membrane proton channel. F(1) has five subunits: alpha(3), beta(3), gamma(1), delta(1), epsilon(1). CF(0) has four main subunits: a(1), b(1), b'(1) and c(10-14). The alpha and beta chains form an alternating ring which encloses part of the gamma chain. F(1) is attached to F(0) by a central stalk formed by the gamma and epsilon chains, while a peripheral stalk is formed by the delta, b and b' chains.

It localises to the cellular thylakoid membrane. F(1)F(0) ATP synthase produces ATP from ADP in the presence of a proton or sodium gradient. F-type ATPases consist of two structural domains, F(1) containing the extramembraneous catalytic core and F(0) containing the membrane proton channel, linked together by a central stalk and a peripheral stalk. During catalysis, ATP synthesis in the catalytic domain of F(1) is coupled via a rotary mechanism of the central stalk subunits to proton translocation. Functionally, this protein is part of the stalk that links CF(0) to CF(1). It either transmits conformational changes from CF(0) to CF(1) or is implicated in proton conduction. Its function is as follows. The complex from the organism is particularly stable to disruption and remains functional after 6 hrs at 55 degrees Celsius. This chain is ATP synthase subunit delta, found in Thermosynechococcus vestitus (strain NIES-2133 / IAM M-273 / BP-1).